The chain runs to 548 residues: Probable malate:quinone oxidoreductase (548 aa).

The segment at 521–548 is disordered; sequence DKPQAADSTPKPQLKPQPVQKEVADIAL. The span at 530–541 shows a compositional bias: low complexity; the sequence is PKPQLKPQPVQK.

It belongs to the MQO family. Requires FAD as cofactor.

It catalyses the reaction (S)-malate + a quinone = a quinol + oxaloacetate. Its pathway is carbohydrate metabolism; tricarboxylic acid cycle; oxaloacetate from (S)-malate (quinone route): step 1/1. This chain is Probable malate:quinone oxidoreductase, found in Shigella sonnei (strain Ss046).